The primary structure comprises 296 residues: Chronophin (296 aa).

Aspartate 25 acts as the Nucleophile in catalysis. Aspartate 25 and asparagine 27 together coordinate Mg(2+). Asparagine 27 acts as the Proton donor in catalysis. Substrate-binding positions include 58-60 (SNN), histidine 182, and lysine 213. Aspartate 238 serves as a coordination point for Mg(2+).

This sequence belongs to the HAD-like hydrolase superfamily. Homodimer. Mg(2+) serves as cofactor. Detected in brain (at protein level).

The protein resides in the cytoplasm. It localises to the cytosol. The protein localises to the cytoskeleton. It is found in the cell projection. Its subcellular location is the ruffle membrane. The protein resides in the lamellipodium membrane. It localises to the cell membrane. It carries out the reaction pyridoxal 5'-phosphate + H2O = pyridoxal + phosphate. The catalysed reaction is pyridoxine 5'-phosphate + H2O = pyridoxine + phosphate. It catalyses the reaction pyridoxamine + phosphate = pyridoxamine 5'-phosphate + H2O. The enzyme catalyses O-phospho-L-seryl-[protein] + H2O = L-seryl-[protein] + phosphate. Functions as a pyridoxal phosphate (PLP) phosphatase, which also catalyzes the dephosphorylation of pyridoxine 5'-phosphate (PNP) and pyridoxamine 5'-phosphate (PMP), with order of substrate preference PLP &gt; PNP &gt; PMP and therefore plays a role in vitamin B6 metabolism. Also functions as a protein serine phosphatase that specifically dephosphorylates 'Ser-3' in proteins of the actin-depolymerizing factor (ADF)/cofilin family like CFL1 and DSTN. Thereby, regulates cofilin-dependent actin cytoskeleton reorganization, being required for normal progress through mitosis and normal cytokinesis. Does not dephosphorylate phosphothreonines in LIMK1. Does not dephosphorylate peptides containing phosphotyrosine. This chain is Chronophin, found in Bos taurus (Bovine).